A 296-amino-acid polypeptide reads, in one-letter code: Phosphoribosylaminoimidazole-succinocarboxamide synthase (296 aa).

The protein belongs to the SAICAR synthetase family.

The enzyme catalyses 5-amino-1-(5-phospho-D-ribosyl)imidazole-4-carboxylate + L-aspartate + ATP = (2S)-2-[5-amino-1-(5-phospho-beta-D-ribosyl)imidazole-4-carboxamido]succinate + ADP + phosphate + 2 H(+). It participates in purine metabolism; IMP biosynthesis via de novo pathway; 5-amino-1-(5-phospho-D-ribosyl)imidazole-4-carboxamide from 5-amino-1-(5-phospho-D-ribosyl)imidazole-4-carboxylate: step 1/2. This chain is Phosphoribosylaminoimidazole-succinocarboxamide synthase, found in Desulfotalea psychrophila (strain LSv54 / DSM 12343).